A 185-amino-acid polypeptide reads, in one-letter code: Regulatory protein RecX (185 aa).

The protein belongs to the RecX family.

Its subcellular location is the cytoplasm. Modulates RecA activity. The polypeptide is Regulatory protein RecX (Thermobifida fusca (strain YX)).